Reading from the N-terminus, the 155-residue chain is Trypsin/factor XIIA inhibitor (155 aa).

The signal sequence occupies residues 1-28 (MASSSSSSHRRLILAAAVLLSVLAAASA). 5 cysteine pairs are disulfide-bonded: Cys34-Cys83, Cys48-Cys72, Cys57-Cys114, Cys73-Cys132, and Cys85-Cys143. Arg62 is a catalytic residue. A propeptide spans 139 to 155 (GVAECPWILGGGTMPSK) (C-terminal peptide).

It belongs to the protease inhibitor I6 (cereal trypsin/alpha-amylase inhibitor) family. In terms of assembly, monomer.

It is found in the secreted. Functionally, potent inhibitor of mammalian trypsin and a specific inhibitor of factor XIIa (activated hageman factor). In Zea mays (Maize), this protein is Trypsin/factor XIIA inhibitor.